We begin with the raw amino-acid sequence, 338 residues long: Ferredoxin--NADP reductase (338 aa).

FAD-binding residues include Asp-36, Gln-44, Tyr-49, Val-89, Phe-123, Asp-290, and Thr-331.

The protein belongs to the ferredoxin--NADP reductase type 2 family. As to quaternary structure, homodimer. FAD serves as cofactor.

The enzyme catalyses 2 reduced [2Fe-2S]-[ferredoxin] + NADP(+) + H(+) = 2 oxidized [2Fe-2S]-[ferredoxin] + NADPH. The polypeptide is Ferredoxin--NADP reductase (Anaplasma phagocytophilum (strain HZ)).